The primary structure comprises 164 residues: CASP-like protein 1C2 (164 aa).

Residues 1–8 (MVKLTQRL) are Cytoplasmic-facing. The chain crosses the membrane as a helical span at residues 9–29 (GGLVLRFAAFCAALGAVIAMI). Over 30–51 (TSRERSSFFVISLVAKYSDLAA) the chain is Extracellular. A helical membrane pass occupies residues 52–72 (FKYFVIANAIVTVYSFLVLFL). Residues 73–80 (PKESLLWK) lie on the Cytoplasmic side of the membrane. A helical transmembrane segment spans residues 81–101 (FVVVLDLMVTMLLTSSLSAAV). At 102-129 (AVAQVGKRGNANAGWLPICGQVPRFCDQ) the chain is on the extracellular side. The helical transmembrane segment at 130-150 (ITGALIAGLVALVLYVFLLIF) threads the bilayer. Over 151 to 164 (SIHHVVDPFLLRKS) the chain is Cytoplasmic.

Belongs to the Casparian strip membrane proteins (CASP) family. In terms of assembly, homodimer and heterodimers.

It is found in the cell membrane. This chain is CASP-like protein 1C2, found in Arabidopsis thaliana (Mouse-ear cress).